The following is a 333-amino-acid chain: MLGWIKRLIRMVFQQVGVSMQSVLWSRKPYGSSRSIVRKIGTNLSLIQCPRVQFQINSHATEWSPSHPGEDAVASFADVGWVAKEEGECSARLRTEVRSRPPLQDDLLFFEKAPSRQISLPDLSQEEPQLKTPALANEEALQKICALENELAALRAQIAKIVTQQEQQNLTAGDLDSTTFGTIPPHPPPPPPPLPPPALGLHQSTSAVDLIKERREKRANAGKTLVKNNPKKPEMPNMLEILKEMNSVKLRSVKRSEQDVKPKPVDATDPAALIAEALKKKFAYRYRSDSQDEVEKGIPKSESEATSERVLFGPHMLKPTGKMKALIENVSDS.

A mitochondrion-targeting transit peptide spans 1–48 (MLGWIKRLIRMVFQQVGVSMQSVLWSRKPYGSSRSIVRKIGTNLSLIQ). Serine 119 bears the Phosphoserine mark. Residues 137 to 169 (NEEALQKICALENELAALRAQIAKIVTQQEQQN) are a coiled coil. 2 disordered regions span residues 177–198 (STTF…PPPA) and 288–315 (SDSQ…FGPH). Residues 179–304 (TFGTIPPHPP…EKGIPKSESE (126 aa)) form a necessary and sufficient to promote mitochondrial fission region. The segment covering 184–198 (PPHPPPPPPPLPPPA) has biased composition (pro residues). Residues 288-307 (SDSQDEVEKGIPKSESEATS) show a composition bias toward basic and acidic residues.

Belongs to the MTFR1 family.

The protein localises to the mitochondrion. May play a role in mitochondrial aerobic respiration. May also regulate mitochondrial organization and fission. This Homo sapiens (Human) protein is Mitochondrial fission regulator 1 (MTFR1).